The following is a 347-amino-acid chain: Holliday junction branch migration complex subunit RuvB (347 aa).

Residues 1–186 (MKDENSINFL…FGITARFELY (186 aa)) are large ATPase domain (RuvB-L). Residues leucine 25, arginine 26, glycine 67, lysine 70, threonine 71, threonine 72, 133 to 135 (EDY), arginine 176, tyrosine 186, and arginine 223 each bind ATP. Threonine 71 is a Mg(2+) binding site. The small ATPAse domain (RuvB-S) stretch occupies residues 187–257 (SEIELVEIIK…IVSIGLEMLR (71 aa)). Residues 260 to 347 (GEGLDEQDRN…DISENQRVSF (88 aa)) form a head domain (RuvB-H) region. 2 residues coordinate DNA: arginine 315 and arginine 320.

The protein belongs to the RuvB family. Homohexamer. Forms an RuvA(8)-RuvB(12)-Holliday junction (HJ) complex. HJ DNA is sandwiched between 2 RuvA tetramers; dsDNA enters through RuvA and exits via RuvB. An RuvB hexamer assembles on each DNA strand where it exits the tetramer. Each RuvB hexamer is contacted by two RuvA subunits (via domain III) on 2 adjacent RuvB subunits; this complex drives branch migration. In the full resolvosome a probable DNA-RuvA(4)-RuvB(12)-RuvC(2) complex forms which resolves the HJ.

It localises to the cytoplasm. It catalyses the reaction ATP + H2O = ADP + phosphate + H(+). Functionally, the RuvA-RuvB-RuvC complex processes Holliday junction (HJ) DNA during genetic recombination and DNA repair, while the RuvA-RuvB complex plays an important role in the rescue of blocked DNA replication forks via replication fork reversal (RFR). RuvA specifically binds to HJ cruciform DNA, conferring on it an open structure. The RuvB hexamer acts as an ATP-dependent pump, pulling dsDNA into and through the RuvAB complex. RuvB forms 2 homohexamers on either side of HJ DNA bound by 1 or 2 RuvA tetramers; 4 subunits per hexamer contact DNA at a time. Coordinated motions by a converter formed by DNA-disengaged RuvB subunits stimulates ATP hydrolysis and nucleotide exchange. Immobilization of the converter enables RuvB to convert the ATP-contained energy into a lever motion, pulling 2 nucleotides of DNA out of the RuvA tetramer per ATP hydrolyzed, thus driving DNA branch migration. The RuvB motors rotate together with the DNA substrate, which together with the progressing nucleotide cycle form the mechanistic basis for DNA recombination by continuous HJ branch migration. Branch migration allows RuvC to scan DNA until it finds its consensus sequence, where it cleaves and resolves cruciform DNA. In Borrelia garinii subsp. bavariensis (strain ATCC BAA-2496 / DSM 23469 / PBi) (Borreliella bavariensis), this protein is Holliday junction branch migration complex subunit RuvB.